Here is a 326-residue protein sequence, read N- to C-terminus: Transcription factor WRKY45-1 (326 aa).

Disordered stretches follow at residues 67 to 114 (GGEG…SVVV) and 252 to 288 (GVGSSDQEEVLSSLTPGSSAARGGGGGGGVAGPFGPD). Positions 112-180 (VVVKNLDDGQ…YIGEHTCRDP (69 aa)) form a DNA-binding region, WRKY. Residues 273-283 (RGGGGGGGVAG) show a composition bias toward gly residues.

It belongs to the WRKY group III family. As to expression, expressed in aleurone cells.

The protein localises to the nucleus. Functionally, transcriptional activator involved in defense responses against pathogens. Acts as a positive regulator of defense responses against the rice blast fungus Magnaporthe oryzae. Acts through W-boxes, which are cis-elements that are enriched in the promoters of several defense-related genes. Plays an important role in the benzothiadiazole-induced disease resistance by mediating salicylic acid (SA) defense signaling pathway, independently of the disease resistance gene NPR1/NH1. Acts as a negative regulator of defense responses against the bacterial blight Xanthomonas oryzae pv oryzae (Xoo) and the bacterial streak Xanthomonas oryzae pv oryzicola (Xoc). Acts downstream of abscisic acid (ABA) signaling in response to the rice blast fungus. ABA is a negative regulator of defense responses that interacts antagonistically with salicylic acid (SA) signaling pathway. Acts as a negative regulator of ABA signaling that suppresses growth of seedlings. Does not seem to be involved in the regulation of salt stress response. Acts as a negative regulator of cold stress response. Acts as a negative regulator of drought stress response. The polypeptide is Transcription factor WRKY45-1 (Oryza sativa subsp. japonica (Rice)).